We begin with the raw amino-acid sequence, 441 residues long: Ribosomal protein uS12 methylthiotransferase RimO (441 aa).

An MTTase N-terminal domain is found at 8-118 (PKIGFVSLGC…VLEHVHHYSP (111 aa)). Residues Cys17, Cys53, Cys82, Cys150, Cys154, and Cys157 each contribute to the [4Fe-4S] cluster site. The Radical SAM core domain occupies 136–373 (LTPRHYAYLK…MQLQQQISAE (238 aa)). The TRAM domain occupies 376–441 (QEKVGREILV…DEYDLWGTRV (66 aa)).

Belongs to the methylthiotransferase family. RimO subfamily. [4Fe-4S] cluster is required as a cofactor.

The protein localises to the cytoplasm. The enzyme catalyses L-aspartate(89)-[ribosomal protein uS12]-hydrogen + (sulfur carrier)-SH + AH2 + 2 S-adenosyl-L-methionine = 3-methylsulfanyl-L-aspartate(89)-[ribosomal protein uS12]-hydrogen + (sulfur carrier)-H + 5'-deoxyadenosine + L-methionine + A + S-adenosyl-L-homocysteine + 2 H(+). Catalyzes the methylthiolation of an aspartic acid residue of ribosomal protein uS12. This is Ribosomal protein uS12 methylthiotransferase RimO from Klebsiella pneumoniae (strain 342).